The sequence spans 1041 residues: Beta-galactosidase (1041 aa).

Asn103 and Asp201 together coordinate substrate. Asp201 contacts Na(+). The Mg(2+) site is built by Glu415, His417, and Glu460. Residues Glu460 and 536 to 539 (EYAH) contribute to the substrate site. Glu460 serves as the catalytic Proton donor. Glu536 acts as the Nucleophile in catalysis. Asn596 lines the Mg(2+) pocket. Na(+) is bound by residues Phe600 and Asn603. Substrate is bound by residues Asn603 and Trp1016.

Belongs to the glycosyl hydrolase 2 family. Homotetramer. Mg(2+) serves as cofactor. It depends on Na(+) as a cofactor.

The catalysed reaction is Hydrolysis of terminal non-reducing beta-D-galactose residues in beta-D-galactosides.. The polypeptide is Beta-galactosidase (Alteromonas mediterranea (strain DSM 17117 / CIP 110805 / LMG 28347 / Deep ecotype)).